We begin with the raw amino-acid sequence, 598 residues long: Polypeptide N-acetylgalactosaminyltransferase 17 (598 aa).

Residues 1–6 (MASLRR) are Cytoplasmic-facing. Residues 7 to 27 (VKVLLVLNLIAVAGFVIFLAK) traverse the membrane as a helical; Signal-anchor for type II membrane protein segment. Residues 28–598 (CRPIAVRSGD…QRWAIKNPIK (571 aa)) are Lumenal-facing. A glycan (N-linked (GlcNAc...) asparagine) is linked at N50. 2 disulfide bridges follow: C142-C373 and C364-C443. Positions 151–262 (LPQISIIFIF…AGWAEPVLSR (112 aa)) are catalytic subdomain A. Substrate is bound by residues D192 and R223. Positions 246, 248, and 378 each coordinate Mn(2+). A catalytic subdomain B region spans residues 319–381 (PIRTPAMIGC…PCSRVAHIER (63 aa)). Residues R381 and Y386 each contribute to the substrate site. N-linked (GlcNAc...) asparagine glycosylation is found at N461 and N486. The Ricin B-type lectin domain maps to 465–594 (AYGELRNNKA…SCTGQRWAIK (130 aa)). Disulfide bonds link C478–C494, C526–C541, and C568–C586.

The protein belongs to the glycosyltransferase 2 family. GalNAc-T subfamily. The cofactor is Mn(2+).

It localises to the golgi apparatus membrane. It catalyses the reaction L-seryl-[protein] + UDP-N-acetyl-alpha-D-galactosamine = a 3-O-[N-acetyl-alpha-D-galactosaminyl]-L-seryl-[protein] + UDP + H(+). The catalysed reaction is L-threonyl-[protein] + UDP-N-acetyl-alpha-D-galactosamine = a 3-O-[N-acetyl-alpha-D-galactosaminyl]-L-threonyl-[protein] + UDP + H(+). It participates in protein modification; protein glycosylation. In terms of biological role, may catalyze the initial reaction in O-linked oligosaccharide biosynthesis, the transfer of an N-acetyl-D-galactosamine residue to a serine or threonine residue on the protein receptor. The protein is Polypeptide N-acetylgalactosaminyltransferase 17 of Mus musculus (Mouse).